A 271-amino-acid polypeptide reads, in one-letter code: Hematopoietically-expressed homeobox protein Hhex (271 aa).

Residues 1–138 (MQFPHPGPAA…PFLQRPLHKR (138 aa)) form an interaction with SOX13 region. Position 54 is a phosphoserine (Ser54). Positions 138-197 (RKGGQVRFSNDQTVELEKKFETQKYLSPPERKRLAKMLQLSERQVKTWFQNRRAKWRRLK) form a DNA-binding region, homeobox. The interval 138-271 (RKGGQVRFSN…EGDKGYFNAG (134 aa)) is required for WNT signaling induction. Residues 195–271 (RLKQENPQSN…EGDKGYFNAG (77 aa)) are disordered. Over residues 212–242 (LDTSCEQGQDLPSEQNKGASLDRSQCSPSPA) the composition is skewed to polar residues. Acidic residues predominate over residues 245–261 (EDPDSEISEDSDQEVDI).

As to quaternary structure, interacts with CD81; the interaction prevents nuclear translocation of HHEX. Interacts (via N-terminus) with SOX13; abolishes the SOX13-mediated inhibition of WNT-mediated transcriptional activity via competitive inhibition of the SOX13-TCF7 complex. Interacts with EIF4E; the interaction inhibits EIF4E-mediated mRNA nuclear export.

The protein resides in the nucleus. The protein localises to the nuclear body. Its subcellular location is the cytoplasm. Functionally, recognizes the DNA sequence 5'-ATTAA-3'. Transcriptional repressor. Activator of WNT-mediated transcription in conjunction with CTNNB1. Establishes anterior identity at two levels; acts early to enhance canonical WNT-signaling by repressing expression of TLE4, and acts later to inhibit NODAL-signaling by directly targeting NODAL. Inhibits EIF4E-mediated mRNA nuclear export. May play a role in hematopoietic differentiation. In Mus musculus (Mouse), this protein is Hematopoietically-expressed homeobox protein Hhex (Hhex).